The primary structure comprises 1453 residues: Leucine-rich repeat-containing protein 9 (1453 aa).

LRR repeat units lie at residues 53–78 (FPNL…CLQL), 97–119 (CRNL…LEKL), 120–141 (IKLK…LQTL), 142–164 (KNLK…LDSN), 166–188 (QLER…NLTR), 224–248 (LQRF…AMKK), and 264–287 (KEDL…RVKL). Residues 302-321 (LKGSGKGHSDGSNNSKVTDP) are disordered. LRR repeat units follow at residues 344–367 (LNAL…IYHI), 671–693 (KARP…TSVY), 694–715 (SHIV…LSKL), 716–737 (TGLR…VYHL), 739–758 (NLEY…GFRG), 759–784 (LMKL…MLCK), 786–812 (TTSL…VIGR), 886–908 (YLKI…LEKL), 909–930 (ENLK…LESC), 931–952 (INLE…ISKM), 953–975 (TKLT…TFDN), 976–1001 (MLHL…SFTL), 1023–1048 (LCNL…LFVI), 1092–1115 (FKQM…PVDQ), 1116–1138 (FRNV…LIYL), 1139–1161 (PNVK…LKPQ), 1201–1224 (MHSL…QLNR), 1225–1247 (LRNL…LDNL), 1248–1270 (VVLQ…AFAK), 1272–1292 (SSLL…KLQS), 1293–1317 (LVKL…KLDV), 1319–1345 (STLR…IFRL), and 1365–1388 (EFHL…PMDG).

The sequence is that of Leucine-rich repeat-containing protein 9 (LRRC9) from Homo sapiens (Human).